The sequence spans 65 residues: Large ribosomal subunit protein uL29 (65 aa).

It belongs to the universal ribosomal protein uL29 family.

This Dehalococcoides mccartyi (strain ATCC BAA-2100 / JCM 16839 / KCTC 5957 / BAV1) protein is Large ribosomal subunit protein uL29.